Reading from the N-terminus, the 391-residue chain is Succinate--CoA ligase [ADP-forming] subunit beta (391 aa).

One can recognise an ATP-grasp domain in the interval 9–246 (KHLFTEAGIA…LTQEDETEVR (238 aa)). ATP-binding positions include Lys-46, 53 to 55 (GRG), Glu-99, Leu-102, and Glu-107. The Mg(2+) site is built by Asn-199 and Asp-213. Substrate-binding positions include Asn-266 and 323–325 (GIV).

It belongs to the succinate/malate CoA ligase beta subunit family. Heterotetramer of two alpha and two beta subunits. The cofactor is Mg(2+).

It carries out the reaction succinate + ATP + CoA = succinyl-CoA + ADP + phosphate. It catalyses the reaction GTP + succinate + CoA = succinyl-CoA + GDP + phosphate. Its pathway is carbohydrate metabolism; tricarboxylic acid cycle; succinate from succinyl-CoA (ligase route): step 1/1. Its function is as follows. Succinyl-CoA synthetase functions in the citric acid cycle (TCA), coupling the hydrolysis of succinyl-CoA to the synthesis of either ATP or GTP and thus represents the only step of substrate-level phosphorylation in the TCA. The beta subunit provides nucleotide specificity of the enzyme and binds the substrate succinate, while the binding sites for coenzyme A and phosphate are found in the alpha subunit. This chain is Succinate--CoA ligase [ADP-forming] subunit beta, found in Halorhodospira halophila (strain DSM 244 / SL1) (Ectothiorhodospira halophila (strain DSM 244 / SL1)).